We begin with the raw amino-acid sequence, 113 residues long: Large ribosomal subunit protein uL22 (113 aa).

The protein belongs to the universal ribosomal protein uL22 family. As to quaternary structure, part of the 50S ribosomal subunit.

In terms of biological role, this protein binds specifically to 23S rRNA; its binding is stimulated by other ribosomal proteins, e.g. L4, L17, and L20. It is important during the early stages of 50S assembly. It makes multiple contacts with different domains of the 23S rRNA in the assembled 50S subunit and ribosome. Its function is as follows. The globular domain of the protein is located near the polypeptide exit tunnel on the outside of the subunit, while an extended beta-hairpin is found that lines the wall of the exit tunnel in the center of the 70S ribosome. In Anoxybacillus flavithermus (strain DSM 21510 / WK1), this protein is Large ribosomal subunit protein uL22.